The primary structure comprises 119 residues: Ubiquinone biosynthesis accessory factor UbiK (119 aa).

Positions 79–99 form a coiled coil; the sequence is LLRTREKLALLEQRLSELEAR. Positions 96-106 are enriched in basic and acidic residues; it reads LEARDKPEEVK. Residues 96–119 form a disordered region; sequence LEARDKPEEVKPAPAIPPVDPQQE. Pro residues predominate over residues 109 to 119; it reads PAIPPVDPQQE.

Belongs to the UbiK family. In terms of assembly, homotrimer.

Its subcellular location is the cytoplasm. The protein operates within cofactor biosynthesis; ubiquinone biosynthesis. Its function is as follows. Required for efficient ubiquinone (coenzyme Q) biosynthesis under aerobic conditions. UbiK is probably an accessory factor of Ubi enzymes and facilitates ubiquinone biosynthesis by acting as an assembly factor, a targeting factor, or both. Dispensable for ubiquinone biosynthesis under anaerobiosis. Required for proliferation in macrophages and virulence in mice. Significantly contributes to colonization and invasion as well as host inflammation and innate immunity after infection. In vitro, has membrane fusogenic activity at acidic pH. This is Ubiquinone biosynthesis accessory factor UbiK from Salmonella typhimurium (strain LT2 / SGSC1412 / ATCC 700720).